The chain runs to 462 residues: Malonyl-coenzyme:anthocyanin 5-O-glucoside-6'''-O-malonyltransferase (462 aa).

Catalysis depends on proton acceptor residues His-167 and Asp-390.

This sequence belongs to the plant acyltransferase family. As to expression, detected in petals and sepals, and at lower levels in bracts and red stems.

It carries out the reaction pelargonidin 3-O-(6-O-[(E)-caffeoyl]-beta-D-glucoside) 5-O-beta-D-glucoside + malonyl-CoA = 4'''-demalonylsalvianin + CoA. It participates in pigment biosynthesis; anthocyanin biosynthesis. With respect to regulation, completely inhibited by 10 mM p-coumaric acid, this inhibition is rapid, reversible and non-competitive. Completely inhibited by 0.1 mM Cu(2+), 0.1 mM Hg(2+) and 10 mM caffeic acid. Partially inhibited by 5 mM N-ethylmaleimide, 1 mM diethylpyrocarbonate and 1 mM acetyl-CoA. In terms of biological role, catalyzes the transfer of a malonyl group from malonyl-CoA to the 6'''-hydroxyl group of the 5-glucosyl moiety of anthocyanins. Active towards bisdemalonylsalvianin (pelargonidin 3-O-(6-caffeoyl-beta-D-glucoside) 5-O-beta-D-glucoside) and shisonin, but not towards nodemalonylsalvianin, salvianin, pelargonidin 3,5-diglucoside and delphinidin 3,5-diglucoside. The chain is Malonyl-coenzyme:anthocyanin 5-O-glucoside-6'''-O-malonyltransferase from Salvia splendens (Scarlet sage).